We begin with the raw amino-acid sequence, 349 residues long: N-acetyl-gamma-glutamyl-phosphate reductase (349 aa).

Residue Cys-152 is part of the active site.

This sequence belongs to the NAGSA dehydrogenase family. Type 1 subfamily.

It localises to the cytoplasm. It carries out the reaction N-acetyl-L-glutamate 5-semialdehyde + phosphate + NADP(+) = N-acetyl-L-glutamyl 5-phosphate + NADPH + H(+). Its pathway is amino-acid biosynthesis; L-arginine biosynthesis; N(2)-acetyl-L-ornithine from L-glutamate: step 3/4. Catalyzes the NADPH-dependent reduction of N-acetyl-5-glutamyl phosphate to yield N-acetyl-L-glutamate 5-semialdehyde. This is N-acetyl-gamma-glutamyl-phosphate reductase from Clavibacter sepedonicus (Clavibacter michiganensis subsp. sepedonicus).